The following is a 1183-amino-acid chain: Chromosome partition protein Smc (1183 aa).

32–39 (PNGCGKTN) is a binding site for ATP. 2 coiled-coil regions span residues 167–322 (ITRY…ERLN) and 358–497 (AEFE…ALCN). Positions 409–442 (KEHLEGSVNRLDQRKRDLERSMEQAEPERRRTSE) are disordered. Residues 419 to 442 (LDQRKRDLERSMEQAEPERRRTSE) show a composition bias toward basic and acidic residues. The region spanning 523-632 (LGCLSDLISV…VADLDAAEQL (110 aa)) is the SMC hinge domain. Coiled-coil stretches lie at residues 669–941 (GKKA…VMER) and 980–1025 (NELA…ALEK).

The protein belongs to the SMC family. Homodimer.

Its subcellular location is the cytoplasm. Its function is as follows. Required for chromosome condensation and partitioning. In Chlorobaculum tepidum (strain ATCC 49652 / DSM 12025 / NBRC 103806 / TLS) (Chlorobium tepidum), this protein is Chromosome partition protein Smc.